The following is a 101-amino-acid chain: Iron-sulfur cluster assembly protein CyaY (101 aa).

Belongs to the frataxin family.

Involved in iron-sulfur (Fe-S) cluster assembly. May act as a regulator of Fe-S biogenesis. The chain is Iron-sulfur cluster assembly protein CyaY from Haemophilus influenzae (strain PittEE).